Reading from the N-terminus, the 101-residue chain is Urease subunit beta (101 aa).

This sequence belongs to the urease beta subunit family. Heterotrimer of UreA (gamma), UreB (beta) and UreC (alpha) subunits. Three heterotrimers associate to form the active enzyme.

Its subcellular location is the cytoplasm. It carries out the reaction urea + 2 H2O + H(+) = hydrogencarbonate + 2 NH4(+). It functions in the pathway nitrogen metabolism; urea degradation; CO(2) and NH(3) from urea (urease route): step 1/1. In Azoarcus sp. (strain BH72), this protein is Urease subunit beta.